The sequence spans 695 residues: uncharacterized protein (695 aa).

This is an uncharacterized protein from Xanthomonas campestris pv. campestris (strain B100).